A 608-amino-acid chain; its full sequence is MATGQIFSKTTQALFYNYKQLPIQRMLDFDFLCGRETPSVAGIINPGSDGFQKLFFGQEEIAIPVHPTIEAACNAHPTADVFINFASFRSAAASSMSALKQPTIRVVAIIAEGVPESDTKQLISYARANNKVIIGPATVGGIQAGAFKIGDTAGTIDNIIQCKLYRPGSVGFVSKSGGMSNEMYNTIARVTDGIYEGIAIGGDVFPGSTLSDHILRFNNIPQVKMMVVLGELGGKDEYSLVEALKQGKVQKPVVAWVSGTCARLFKSEVQFGHAGAKSGGELESAQAKNQALKDAGAVVPTSYEALETAIKETFEKLVEDGKISPVTEITPPPIPEDLKTAIKSGKVRAPTHIISTISDDRGEEPCYAGVPMSTIIEQGYGVGDVISLLWFKRSLPRYCTQFIEMCIMLCADHGPCVSGAHNSIVTARAGKDLVSSLVSGLLTIGPRFGGAIDDAARYFKDAYDRNLTPYEFVEGMKKKGIRVPGIGHRIKSRDNRDKRVQLLQKYAHTHFPSVKYMEYAVQVETYTLSKANNLVLNVDGAIGSLFLDLLSGSGMFSKQEIDEIVEIGYLNGLFVLARSIGLIGHTFDQKRLKQPLYRHPWEDVLYTK.

Residues 214-234 (ILRFNNIPQVKMMVVLGELGG) and 265-291 (FKSEVQFGHAGAKSGGELESAQAKNQA) each bind ATP. Glu-231 is a Mg(2+) binding site. Residue His-273 is the Tele-phosphohistidine intermediate of the active site. 292–302 (LKDAGAVVPTS) contacts CoA.

The protein belongs to the succinate/malate CoA ligase alpha subunit family. As to quaternary structure, heterooctamer of 4 alpha and 4 beta chains.

The protein resides in the cytoplasm. It is found in the cytosol. It carries out the reaction oxaloacetate + acetyl-CoA + ADP + phosphate = citrate + ATP + CoA. ATP citrate-lyase is the primary enzyme responsible for the synthesis of cytosolic acetyl-CoA, used for the elongation of fatty acids and biosynthesis of isoprenoids, flavonoids and malonated derivatives. May supply substrate to the cytosolic acetyl-CoA carboxylase, which generates the malonyl-CoA used for the synthesis of a multitude of compounds, including very long chain fatty acids and flavonoids. In contrast to all known animal ACL enzymes having a homomeric structure, plant ACLs are composed of alpha and beta chains. The chain is ATP-citrate synthase beta chain protein 1 (ACLB-1) from Oryza sativa subsp. japonica (Rice).